The following is a 294-amino-acid chain: Taste receptor type 2 member 143 (294 aa).

Residues methionine 1–leucine 7 are Extracellular-facing. The chain crosses the membrane as a helical span at residues isoleucine 8–isoleucine 28. The Cytoplasmic portion of the chain corresponds to isoleucine 29–alanine 43. The helical transmembrane segment at valine 44 to leucine 64 threads the bilayer. Topologically, residues asparagine 65–valine 80 are extracellular. The helical transmembrane segment at glycine 81–phenylalanine 101 threads the bilayer. The Cytoplasmic segment spans residues tyrosine 102 to leucine 128. Residues leucine 129–isoleucine 149 traverse the membrane as a helical segment. Residues alanine 150–histidine 180 are Extracellular-facing. N-linked (GlcNAc...) asparagine glycosylation is present at asparagine 162. Residues alanine 181–phenylalanine 201 traverse the membrane as a helical segment. The Cytoplasmic segment spans residues serine 202–methionine 227. A helical transmembrane segment spans residues alanine 228–isoleucine 248. The Extracellular segment spans residues serine 249–tryptophan 260. The helical transmembrane segment at tyrosine 261–leucine 281 threads the bilayer. Over serine 282 to phenylalanine 294 the chain is Cytoplasmic.

Belongs to the G-protein coupled receptor T2R family.

It is found in the membrane. Putative taste receptor which may play a role in the perception of bitterness. In Rattus norvegicus (Rat), this protein is Taste receptor type 2 member 143.